Here is a 590-residue protein sequence, read N- to C-terminus: Complement component C8 beta chain (590 aa).

The N-terminal stretch at 1-32 (MKKSWTWTWRVPAELLLLCAALGCLCVPGSRS) is a signal peptide. The propeptide occupies 33–54 (ERPRSLEPTVVNRSLAKSRHSR). N-linked (GlcNAc...) asparagine glycosylation occurs at Asn44. Positions 64-117 (DCELSSWSSWTMCDPCQKKRYRHAYLLRPSQFNGEPCNFSDKEVEDCATSRPCR) constitute a TSP type-1 1 domain. 7 cysteine pairs are disulfide-bonded: Cys65–Cys100, Cys76–Cys110, Cys79–Cys116, Cys122–Cys133, Cys127–Cys146, Cys140–Cys155, and Cys162–Cys200. C-linked (Man) tryptophan glycosylation is found at Trp70 and Trp73. N-linked (GlcNAc...) asparagine glycosylation occurs at Asn101. Residues 120 to 157 (VRCEGFVCAQTGRCVNRRLLCNGDNDCGDQSDEANCRK) form the LDL-receptor class A domain. 6 residues coordinate Ca(2+): Leu138, Asn141, Asp143, Asp145, Asp151, and Glu152. In terms of domain architecture, MACPF spans 158–504 (IYKKCHHEME…EFQGEVSPCR (347 aa)). A run of 4 beta stranded transmembrane segments spans residues 252–259 (STFNLGFK), 262–269 (SIFEFGIN), 379–386 (AKNDFKLG), and 392–399 (VYVSLGVS). Cys378 and Cys403 are joined by a disulfide. A Phosphothreonine modification is found at Thr418. 4 cysteine pairs are disulfide-bonded: Cys503/Cys550, Cys505/Cys521, Cys508/Cys523, and Cys525/Cys534. The EGF-like domain maps to 505-535 (CAPCQGNGVPVQKGSRCDCICPVGFQGSACE). A TSP type-1 2 domain is found at 545-588 (DGRWSCWSRWSSCSGGQKTRRRQCNNPAPQDGGSPCSGPASETL). Residues Trp551 and Trp554 are each glycosylated (C-linked (Man) tryptophan). A disulfide bridge links Cys557 with Cys590. Residues 557-590 (CSGGQKTRRRQCNNPAPQDGGSPCSGPASETLAC) are disordered.

Belongs to the complement C6/C7/C8/C9 family. Heterotrimer of 3 chains: alpha (C8A), beta (C8B) and gamma (C8G); the alpha and gamma chains are disulfide bonded. Component of the membrane attack complex (MAC), composed of complement C5b, C6, C7, C8A, C8B, C8G and multiple copies of the pore-forming subunit C9. Post-translationally, N-glycosylated; contains one or two bound glycans. Not O-glycosylated.

The protein localises to the secreted. The protein resides in the target cell membrane. Membrane attack complex (MAC) assembly is inhibited by CD59, thereby protecting self-cells from damage during complement activation. CD59 acts by binding to the beta-haipins of C8 (C8A and C8B), forming an intermolecular beta-sheet that prevents incorporation of the multiple copies of C9 required for complete formation of the osmolytic pore. MAC assembly is also inhibited by clusterin (CLU) chaperones that inhibit polymerization of C9. Functionally, component of the membrane attack complex (MAC), a multiprotein complex activated by the complement cascade, which inserts into a target cell membrane and forms a pore, leading to target cell membrane rupture and cell lysis. The MAC is initiated by proteolytic cleavage of C5 into complement C5b in response to the classical, alternative, lectin and GZMK complement pathways. The complement pathways consist in a cascade of proteins that leads to phagocytosis and breakdown of pathogens and signaling that strengthens the adaptive immune system. C8B, together with C8A and C8G, inserts into the target membrane, but does not form pores by itself. During MAC assembly, associates with C5b, C6 and C7 to form the C5b8 intermediate complex that inserts into the target membrane and traverses the bilayer increasing membrane rigidity. This Oryctolagus cuniculus (Rabbit) protein is Complement component C8 beta chain (C8B).